A 448-amino-acid polypeptide reads, in one-letter code: Alginate biosynthesis transcriptional regulatory protein AlgB (448 aa).

The Response regulatory domain maps to 10–124; the sequence is RILLVDDESA…QLRLATAKQL (115 aa). At aspartate 59 the chain carries 4-aspartylphosphate. Positions 147–376 constitute a Sigma-54 factor interaction domain; it reads LDSHSPSMMA…LRNVIERASI (230 aa). ATP-binding positions include 175–182 and 238–247; these read GESGTGKG and ADGGTLFLDE. The segment at residues 425–444 is a DNA-binding region (H-T-H motif); sequence LDQAAKTLGIDASTLYRKRK.

It participates in glycan biosynthesis; alginate biosynthesis [regulation]. Positive regulator of the alginate biosynthetic gene algD. This chain is Alginate biosynthesis transcriptional regulatory protein AlgB (algB), found in Pseudomonas syringae pv. tomato (strain ATCC BAA-871 / DC3000).